We begin with the raw amino-acid sequence, 217 residues long: Protein matrimony (217 aa).

Positions 39-41 match the POLO box domain (PBD)-binding motif; it reads STP. Phosphoserine occurs at positions 63 and 66. The disordered stretch occupies residues 83-106; sequence KQQQQQQHQHCHRTQLKPPPFVLP. One can recognise an SAM domain in the interval 157-217; sequence NHAANVEQIL…NRIMDVLHTL (61 aa).

In terms of assembly, interacts with polo. Interacts with cort. In terms of processing, probably ubiquitinated: degraded during the oocyte-to-embryo transition by the anaphase promoting complex/cyclosome (APC/C) containing cort protein.

Its subcellular location is the nucleus. It is found in the chromosome. Functionally, polo kinase inhibitor required to maintain G2 arrest in the meiotic cell cycle in females. Holds heterochromatically paired homologs together from the end of pachytene until metaphase I. Haploinsufficient locus for homologous achiasmate segregation and may be required for the maintenance of heterochromatic pairings. The chain is Protein matrimony from Drosophila melanogaster (Fruit fly).